Reading from the N-terminus, the 264-residue chain is Thymidylate synthase (264 aa).

Arginine 21 lines the dUMP pocket. Histidine 51 is a (6R)-5,10-methylene-5,6,7,8-tetrahydrofolate binding site. 126–127 (RR) provides a ligand contact to dUMP. Cysteine 146 serves as the catalytic Nucleophile. Residues 166–169 (RSVD), asparagine 177, and 207–209 (HLY) contribute to the dUMP site. Aspartate 169 provides a ligand contact to (6R)-5,10-methylene-5,6,7,8-tetrahydrofolate. (6R)-5,10-methylene-5,6,7,8-tetrahydrofolate is bound at residue alanine 263.

The protein belongs to the thymidylate synthase family. Bacterial-type ThyA subfamily. In terms of assembly, homodimer.

It localises to the cytoplasm. It catalyses the reaction dUMP + (6R)-5,10-methylene-5,6,7,8-tetrahydrofolate = 7,8-dihydrofolate + dTMP. It participates in pyrimidine metabolism; dTTP biosynthesis. Catalyzes the reductive methylation of 2'-deoxyuridine-5'-monophosphate (dUMP) to 2'-deoxythymidine-5'-monophosphate (dTMP) while utilizing 5,10-methylenetetrahydrofolate (mTHF) as the methyl donor and reductant in the reaction, yielding dihydrofolate (DHF) as a by-product. This enzymatic reaction provides an intracellular de novo source of dTMP, an essential precursor for DNA biosynthesis. This chain is Thymidylate synthase, found in Geobacillus sp. (strain WCH70).